The sequence spans 604 residues: Solute carrier family 23 member 1 (604 aa).

Positions 1-29 (MKAQEDPGSSKQHECPDSAGTSTRDQQAP) are disordered. Residues 1–59 (MKAQEDPGSSKQHECPDSAGTSTRDQQAPLPAEPKFDMLYKIEDVPPWYLCILLGFQHY) are Cytoplasmic-facing. Residues 60–80 (LTCFSGTIAVPFLLAEALCVG) form a helical membrane-spanning segment. Topologically, residues 81–88 (RDQHMISQ) are extracellular. Residues 89 to 109 (LIGTIFTCVGITTLIQTTVGI) traverse the membrane as a helical segment. Residue R110 is a topological domain, cytoplasmic. A helical membrane pass occupies residues 111-131 (LPLFQASAFAFLVPAKAILAL). The Extracellular portion of the chain corresponds to 132 to 166 (ERWKCPPEEEIYGNWSMPLNTSHIWHPRIREVQGA). N-linked (GlcNAc...) asparagine glycosylation is found at N145 and N151. A helical membrane pass occupies residues 167–187 (IMVSSVVEVVIGLLGLPGALL). Topologically, residues 188–214 (SYIGPLTVTPTVSLIGLSVFQAAGDRA) are cytoplasmic. Residues 215–232 (GSHWGISACSILLIVLFS) form a helical membrane-spanning segment. The Extracellular portion of the chain corresponds to 233–236 (QYLR). Positions 237–250 (NLTFLLPVYRWGKG) form an intramembrane region, helical. Residues 251 to 257 (LTLFRIQ) are Extracellular-facing. The helical transmembrane segment at 258–278 (IFKMFPIVLAIMTVWLLCYVL) threads the bilayer. Topologically, residues 279–319 (TLTDVLPADPTVYGFQARTDARGDIMAISPWIRIPYPCQWG) are cytoplasmic. A helical membrane pass occupies residues 320–340 (LPTVTVAAVLGMFSATLAGII). Residues 341–365 (ESIGDYYACARLAGAPPPPVHAINR) are Extracellular-facing. Residues 366-386 (GIFTEGVCCIIAGLLGTGNGS) traverse the membrane as a helical segment. Over 387–409 (TSSSPNIGVLGITKVGSRRVVQY) the chain is Cytoplasmic. The chain crosses the membrane as a helical span at residues 410–430 (GAGIMLILGAIGKFTALFASL). At 431-433 (PDP) the chain is on the extracellular side. Residues 434–454 (ILGGMFCTLFGMITAVGLSNL) form a helical membrane-spanning segment. Topologically, residues 455 to 464 (QFVDMNSSRN) are cytoplasmic. A helical membrane pass occupies residues 465-485 (LFVLGFSMFFGLTLPNYLDSN). Topologically, residues 486-497 (PGAINTGVPEVD) are extracellular. A helical membrane pass occupies residues 498–518 (QILTVLLTTEMFVGGCLAFIL). Residues 519–604 (DNTVPGSPEE…TETGSVCTKV (86 aa)) are Cytoplasmic-facing. T597 carries the post-translational modification Phosphothreonine. S599 is subject to Phosphoserine. T602 bears the Phosphothreonine mark.

It belongs to the nucleobase:cation symporter-2 (NCS2) (TC 2.A.40) family. In terms of processing, phosphorylated. Highly expressed in the straight segment of proximal tubules in the kidney, in intestine and liver. Detected in epithelial cells of the bronchiole and epididymis.

The protein localises to the cell membrane. It carries out the reaction L-ascorbate(out) + 2 Na(+)(out) = L-ascorbate(in) + 2 Na(+)(in). The enzyme catalyses urate(out) + 2 Na(+)(out) = urate(in) + 2 Na(+)(in). Sodium/ascorbate cotransporter. Mediates electrogenic uptake of vitamin C, with a stoichiometry of 2 Na(+) for each ascorbate. Has retained some ancestral activity toward nucleobases such as urate, an oxidized purine. Low-affinity high-capacity sodium:urate cotransporter, may regulate serum urate levels by serving as a renal urate re-absorber. The polypeptide is Solute carrier family 23 member 1 (Slc23a1) (Rattus norvegicus (Rat)).